The following is a 270-amino-acid chain: Hydroxyethylthiazole kinase (270 aa).

Substrate is bound at residue Met-44. Residues Arg-119 and Thr-165 each contribute to the ATP site. A substrate-binding site is contributed by Gly-192.

It belongs to the Thz kinase family. Mg(2+) is required as a cofactor.

It carries out the reaction 5-(2-hydroxyethyl)-4-methylthiazole + ATP = 4-methyl-5-(2-phosphooxyethyl)-thiazole + ADP + H(+). Its pathway is cofactor biosynthesis; thiamine diphosphate biosynthesis; 4-methyl-5-(2-phosphoethyl)-thiazole from 5-(2-hydroxyethyl)-4-methylthiazole: step 1/1. Functionally, catalyzes the phosphorylation of the hydroxyl group of 4-methyl-5-beta-hydroxyethylthiazole (THZ). In Corynebacterium efficiens (strain DSM 44549 / YS-314 / AJ 12310 / JCM 11189 / NBRC 100395), this protein is Hydroxyethylthiazole kinase.